Reading from the N-terminus, the 181-residue chain is Probable pyruvoyl-dependent arginine decarboxylase (181 aa).

Pyruvic acid (Ser) is present on S43.

Belongs to the PdaD family. The cofactor is pyruvate.

It carries out the reaction L-arginine + H(+) = agmatine + CO2. In Chlorobium phaeobacteroides (strain BS1), this protein is Probable pyruvoyl-dependent arginine decarboxylase.